We begin with the raw amino-acid sequence, 328 residues long: Anthranilate phosphoribosyltransferase (328 aa).

5-phospho-alpha-D-ribose 1-diphosphate-binding positions include Gly79, 82 to 83, Thr87, 89 to 92, 107 to 115, and Ser119; these read GD, NIST, and KHGNYAVSS. Gly79 lines the anthranilate pocket. Mg(2+) is bound at residue Ser91. Asn110 is an anthranilate binding site. Arg165 lines the anthranilate pocket. The Mg(2+) site is built by Asp223 and Glu224.

The protein belongs to the anthranilate phosphoribosyltransferase family. As to quaternary structure, homodimer. Mg(2+) is required as a cofactor.

It carries out the reaction N-(5-phospho-beta-D-ribosyl)anthranilate + diphosphate = 5-phospho-alpha-D-ribose 1-diphosphate + anthranilate. The protein operates within amino-acid biosynthesis; L-tryptophan biosynthesis; L-tryptophan from chorismate: step 2/5. Functionally, catalyzes the transfer of the phosphoribosyl group of 5-phosphorylribose-1-pyrophosphate (PRPP) to anthranilate to yield N-(5'-phosphoribosyl)-anthranilate (PRA). The sequence is that of Anthranilate phosphoribosyltransferase from Cytophaga hutchinsonii (strain ATCC 33406 / DSM 1761 / CIP 103989 / NBRC 15051 / NCIMB 9469 / D465).